We begin with the raw amino-acid sequence, 327 residues long: Thiamine-binding periplasmic protein (327 aa).

The N-terminal stretch at 1–18 is a signal peptide; that stretch reads MLKKYLPLLLLCAAPAFA. Residues 59 to 60, 161 to 162, Trp-197, and 215 to 218 each bind thiamine; these read DG, ST, and YTTS.

This sequence belongs to the bacterial solute-binding protein 1 family. The complex is composed of two ATP-binding proteins (ThiQ), two transmembrane proteins (ThiP) and a solute-binding protein (ThiB).

Its subcellular location is the periplasm. Its function is as follows. Part of the ABC transporter complex ThiBPQ involved in thiamine import. Is also involved in thiamine pyrophosphate transport. The polypeptide is Thiamine-binding periplasmic protein (Salmonella typhimurium (strain LT2 / SGSC1412 / ATCC 700720)).